The sequence spans 686 residues: ATP-dependent zinc metalloprotease FTSH 6, chloroplastic (686 aa).

The segment covering 1-14 has biased composition (polar residues); the sequence is MSPTAMSLTTTTSR. The interval 1-52 is disordered; the sequence is MSPTAMSLTTTTSRLPICRAQGGGVAKEKRTTPPPAKITPPSSSSSEAAGLS. Residues 1-75 constitute a chloroplast transit peptide; that stretch reads MSPTAMSLTT…LGLTAARPAR (75 aa). A compositionally biased stretch (low complexity) spans 39 to 52; it reads TPPSSSSSEAAGLS. The chain crosses the membrane as a helical span at residues 164 to 184; sequence VMLLDLLVNFGFPLLFVASLL. ATP is bound at residue 261 to 268; the sequence is GPPGTGKT. Zn(2+) is bound at residue H483. Residue E484 is part of the active site. Zn(2+) contacts are provided by H487 and D562.

This sequence in the N-terminal section; belongs to the AAA ATPase family. The protein in the C-terminal section; belongs to the peptidase M41 family. The cofactor is Zn(2+).

It is found in the plastid. It localises to the chloroplast thylakoid membrane. Its function is as follows. Probable ATP-dependent zinc metallopeptidase. This is ATP-dependent zinc metalloprotease FTSH 6, chloroplastic (FTSH6) from Oryza sativa subsp. japonica (Rice).